Reading from the N-terminus, the 231-residue chain is Large ribosomal subunit protein uL1 (231 aa).

Belongs to the universal ribosomal protein uL1 family. As to quaternary structure, part of the 50S ribosomal subunit.

Its function is as follows. Binds directly to 23S rRNA. The L1 stalk is quite mobile in the ribosome, and is involved in E site tRNA release. In terms of biological role, protein L1 is also a translational repressor protein, it controls the translation of the L11 operon by binding to its mRNA. This Francisella philomiragia subsp. philomiragia (strain ATCC 25017 / CCUG 19701 / FSC 153 / O#319-036) protein is Large ribosomal subunit protein uL1.